A 288-amino-acid polypeptide reads, in one-letter code: MKGSTVHTKWQAYCRLMRIDKPIGSLLLLWPTLWALWLAGRGIPEAKILVVFVLGVFFMRAAGCVVNDYADRHIDGFVKRTASRPLPSGTISEKESKILFVVLILLSFGLVLTLNSMTIWLSLAALALAWIYPFMKRVTHLPQVVLGAAFGWSIPMGFAAVSESLPLVCWLLLLANICWTVAYDTQYAMVDRDDDLRIGVKSTAILFGQHDKLIIGLLQLATLLLMVAIGWLMNLGGAFYWSILLAGALFTHQQKMIAQREREPCFRAFLNNNYVGLVLFLGILISYW.

8 helical membrane passes run I23–I43, A46–V66, I98–T118, L141–V161, E163–Y183, L213–M233, N234–Q254, and A268–W288.

This sequence belongs to the UbiA prenyltransferase family. Requires Mg(2+) as cofactor.

It is found in the cell inner membrane. The enzyme catalyses all-trans-octaprenyl diphosphate + 4-hydroxybenzoate = 4-hydroxy-3-(all-trans-octaprenyl)benzoate + diphosphate. Its pathway is cofactor biosynthesis; ubiquinone biosynthesis. Functionally, catalyzes the prenylation of para-hydroxybenzoate (PHB) with an all-trans polyprenyl group. Mediates the second step in the final reaction sequence of ubiquinone-8 (UQ-8) biosynthesis, which is the condensation of the polyisoprenoid side chain with PHB, generating the first membrane-bound Q intermediate 3-octaprenyl-4-hydroxybenzoate. The chain is 4-hydroxybenzoate octaprenyltransferase from Yersinia pestis bv. Antiqua (strain Antiqua).